Here is a 211-residue protein sequence, read N- to C-terminus: Redox-sensing transcriptional repressor Rex (211 aa).

A DNA-binding region (H-T-H motif) is located at residues 18 to 57 (LYYRFIESLHAAGKQRVSSTELSQAVKVDSATIRRDFSYF). 92-97 (GVGNLG) is a binding site for NAD(+).

Belongs to the transcriptional regulatory Rex family. Homodimer.

The protein localises to the cytoplasm. Modulates transcription in response to changes in cellular NADH/NAD(+) redox state. The polypeptide is Redox-sensing transcriptional repressor Rex (Shouchella clausii (strain KSM-K16) (Alkalihalobacillus clausii)).